We begin with the raw amino-acid sequence, 78 residues long: Small ribosomal subunit protein bS20 (78 aa).

Belongs to the bacterial ribosomal protein bS20 family.

Functionally, binds directly to 16S ribosomal RNA. The sequence is that of Small ribosomal subunit protein bS20 from Streptococcus pneumoniae serotype 19F (strain G54).